A 104-amino-acid chain; its full sequence is Large ribosomal subunit protein uL24 (104 aa).

This sequence belongs to the universal ribosomal protein uL24 family. Part of the 50S ribosomal subunit.

Its function is as follows. One of two assembly initiator proteins, it binds directly to the 5'-end of the 23S rRNA, where it nucleates assembly of the 50S subunit. In terms of biological role, one of the proteins that surrounds the polypeptide exit tunnel on the outside of the subunit. The chain is Large ribosomal subunit protein uL24 from Shewanella amazonensis (strain ATCC BAA-1098 / SB2B).